Here is a 29-residue protein sequence, read N- to C-terminus: Cyclotide psyleio C (29 aa).

The cyclopeptide (Gly-Arg) cross-link spans 1–29 (GDLPVCGETCFGGTCNTPGCVCAWPVCTR). 3 disulfides stabilise this stretch: Cys-6/Cys-20, Cys-10/Cys-22, and Cys-15/Cys-27.

In terms of processing, this is a cyclic peptide.

In terms of biological role, probably participates in a plant defense mechanism. This Psychotria leiocarpa protein is Cyclotide psyleio C.